We begin with the raw amino-acid sequence, 131 residues long: MSAATDEILEKLKTLTLLEAAELVKQIEEAFGVSAAAPAGGMVMMAPGAGAAAPAEEVEEKTAFDVVLDDVPADKKIAVLKIVRELTGLGLKEAKEVVESTPKPIKEGISKEDAEAAKKQLEDAGGKVSIK.

Basic and acidic residues predominate over residues 100 to 125; that stretch reads STPKPIKEGISKEDAEAAKKQLEDAG. A disordered region spans residues 100–131; it reads STPKPIKEGISKEDAEAAKKQLEDAGGKVSIK.

This sequence belongs to the bacterial ribosomal protein bL12 family. In terms of assembly, homodimer. Part of the ribosomal stalk of the 50S ribosomal subunit. Forms a multimeric L10(L12)X complex, where L10 forms an elongated spine to which 2 to 4 L12 dimers bind in a sequential fashion. Binds GTP-bound translation factors.

Forms part of the ribosomal stalk which helps the ribosome interact with GTP-bound translation factors. Is thus essential for accurate translation. The sequence is that of Large ribosomal subunit protein bL12 from Cyanothece sp. (strain PCC 7425 / ATCC 29141).